Consider the following 527-residue polypeptide: DNA polymerase epsilon subunit 2 (527 aa).

Belongs to the DNA polymerase epsilon subunit B family. Component of the DNA polymerase epsilon complex consisting of four subunits: the catalytic subunit POLE and the accessory subunits POLE2, POLE3 and POLE4.

It localises to the nucleus. Functionally, accessory component of the DNA polymerase epsilon complex. Participates in DNA repair and in chromosomal DNA replication. This is DNA polymerase epsilon subunit 2 (Pole2) from Mus musculus (Mouse).